Consider the following 223-residue polypeptide: Phosphoribosylformylglycinamidine synthase subunit PurQ (223 aa).

One can recognise a Glutamine amidotransferase type-1 domain in the interval 3–223 (SAVILLPGLN…LFAGALGITA (221 aa)). Cys87 functions as the Nucleophile in the catalytic mechanism. Active-site residues include His197 and Glu199.

In terms of assembly, part of the FGAM synthase complex composed of 1 PurL, 1 PurQ and 2 PurS subunits.

It localises to the cytoplasm. The enzyme catalyses N(2)-formyl-N(1)-(5-phospho-beta-D-ribosyl)glycinamide + L-glutamine + ATP + H2O = 2-formamido-N(1)-(5-O-phospho-beta-D-ribosyl)acetamidine + L-glutamate + ADP + phosphate + H(+). The catalysed reaction is L-glutamine + H2O = L-glutamate + NH4(+). The protein operates within purine metabolism; IMP biosynthesis via de novo pathway; 5-amino-1-(5-phospho-D-ribosyl)imidazole from N(2)-formyl-N(1)-(5-phospho-D-ribosyl)glycinamide: step 1/2. Functionally, part of the phosphoribosylformylglycinamidine synthase complex involved in the purines biosynthetic pathway. Catalyzes the ATP-dependent conversion of formylglycinamide ribonucleotide (FGAR) and glutamine to yield formylglycinamidine ribonucleotide (FGAM) and glutamate. The FGAM synthase complex is composed of three subunits. PurQ produces an ammonia molecule by converting glutamine to glutamate. PurL transfers the ammonia molecule to FGAR to form FGAM in an ATP-dependent manner. PurS interacts with PurQ and PurL and is thought to assist in the transfer of the ammonia molecule from PurQ to PurL. In Brucella suis biovar 1 (strain 1330), this protein is Phosphoribosylformylglycinamidine synthase subunit PurQ.